The chain runs to 660 residues: MKTVVFAYHDMGCLGIEALLAAGYEISAIFTHTDNPGEKAFYGSVARLAAERGIPVYAPDNVNHPLWVERIAQLSPEVIFSFYYRHLICDEILQLAPRGAFNLHGSLLPKYRGRAPLNWVLVNGETETGVTLHRMVKRADAGAIVAQLRVAIAPDDIAITLHHKLCHAARQLLEQTLPAIKHGNILEIAQRENEATCFGRRTPDDSFLEWHKSASVLHNMVRAVADPWPGAFSYVGNQKFTVWSSRVHPHASKAQPGSVISVAPLLIACGDGALEIVTGQAGDGITMQGSQLAQTLGLVQGSRLNSQPACAARRRTRVLILGVNGFIGNHLTERLLCEDHYEVYGLDIGSDAISRFLNHPHFHFVEGDISIHSEWIEYHVKKCDVVLPLVAIATPIEYTRNPLRVFELDFEENLRIIRYCVKYRKRIIFPSTSEVYGMCSDKYFDEDHSNLIVGPVNKPRWIYSVSKQLLDRVIWAYGEKEGLQFTLFRPFNWMGPRLDNLNAARIGSSRAITQLILNLVEGSPIKLIDGGKQKRCFTDIRDGIEALYRIIENAGNRCDGEIINIGNPENEASIEELGEMLLASFEKHPLRHYFPPFAGFRVVESSSYYGKGYQDVEHRKPSIRNARRCLDWEPKIDMQETIDETLDFFLRTVDLTDKPL.

A formyltransferase ArnAFT region spans residues 1–304; sequence MKTVVFAYHD…TLGLVQGSRL (304 aa). A (6R)-10-formyltetrahydrofolate-binding site is contributed by 86-88; it reads HLI. The active-site Proton donor; for formyltransferase activity is histidine 104. Residues arginine 114 and 136–140 contribute to the (6R)-10-formyltetrahydrofolate site; that span reads VKRAD. Residues 314 to 660 form a dehydrogenase ArnADH region; that stretch reads RRTRVLILGV…RTVDLTDKPL (347 aa). Residues aspartate 347 and 368 to 369 each bind NAD(+); that span reads DI. Residues alanine 393, tyrosine 398, and 432-433 each bind UDP-alpha-D-glucuronate; that span reads TS. Glutamate 434 (proton acceptor; for decarboxylase activity) is an active-site residue. UDP-alpha-D-glucuronate-binding positions include arginine 460, asparagine 492, 526–535, and tyrosine 613; that span reads KLIDGGKQKR. The Proton donor; for decarboxylase activity role is filled by arginine 619.

It in the N-terminal section; belongs to the Fmt family. UDP-L-Ara4N formyltransferase subfamily. The protein in the C-terminal section; belongs to the NAD(P)-dependent epimerase/dehydratase family. UDP-glucuronic acid decarboxylase subfamily. In terms of assembly, homohexamer, formed by a dimer of trimers.

The catalysed reaction is UDP-alpha-D-glucuronate + NAD(+) = UDP-beta-L-threo-pentopyranos-4-ulose + CO2 + NADH. The enzyme catalyses UDP-4-amino-4-deoxy-beta-L-arabinose + (6R)-10-formyltetrahydrofolate = UDP-4-deoxy-4-formamido-beta-L-arabinose + (6S)-5,6,7,8-tetrahydrofolate + H(+). The protein operates within nucleotide-sugar biosynthesis; UDP-4-deoxy-4-formamido-beta-L-arabinose biosynthesis; UDP-4-deoxy-4-formamido-beta-L-arabinose from UDP-alpha-D-glucuronate: step 1/3. It functions in the pathway nucleotide-sugar biosynthesis; UDP-4-deoxy-4-formamido-beta-L-arabinose biosynthesis; UDP-4-deoxy-4-formamido-beta-L-arabinose from UDP-alpha-D-glucuronate: step 3/3. It participates in bacterial outer membrane biogenesis; lipopolysaccharide biosynthesis. Functionally, bifunctional enzyme that catalyzes the oxidative decarboxylation of UDP-glucuronic acid (UDP-GlcUA) to UDP-4-keto-arabinose (UDP-Ara4O) and the addition of a formyl group to UDP-4-amino-4-deoxy-L-arabinose (UDP-L-Ara4N) to form UDP-L-4-formamido-arabinose (UDP-L-Ara4FN). The modified arabinose is attached to lipid A and is required for resistance to polymyxin and cationic antimicrobial peptides. The chain is Bifunctional polymyxin resistance protein ArnA from Escherichia coli O6:K15:H31 (strain 536 / UPEC).